The sequence spans 375 residues: Chaperone protein DnaJ (375 aa).

The 65-residue stretch at 4–68 folds into the J domain; it reads DYYEVLGVGK…QKRAQYDRFG (65 aa). The CR-type zinc finger occupies 129–211; sequence GKETDVEIPK…CRGSGRVKVR (83 aa). Residues cysteine 142, cysteine 145, cysteine 159, cysteine 162, cysteine 185, cysteine 188, cysteine 199, and cysteine 202 each coordinate Zn(2+). 4 CXXCXGXG motif repeats span residues 142-149, 159-166, 185-192, and 199-206; these read CDTCHGSG, CKTCSGTG, CTTCEGKG, and CSSCRGSG. The tract at residues 349–375 is disordered; that stretch reads LSGEKPGQHGGEDEGFFEKMKRAFRGE.

It belongs to the DnaJ family. In terms of assembly, homodimer. The cofactor is Zn(2+).

Its subcellular location is the cytoplasm. In terms of biological role, participates actively in the response to hyperosmotic and heat shock by preventing the aggregation of stress-denatured proteins and by disaggregating proteins, also in an autonomous, DnaK-independent fashion. Unfolded proteins bind initially to DnaJ; upon interaction with the DnaJ-bound protein, DnaK hydrolyzes its bound ATP, resulting in the formation of a stable complex. GrpE releases ADP from DnaK; ATP binding to DnaK triggers the release of the substrate protein, thus completing the reaction cycle. Several rounds of ATP-dependent interactions between DnaJ, DnaK and GrpE are required for fully efficient folding. Also involved, together with DnaK and GrpE, in the DNA replication of plasmids through activation of initiation proteins. This is Chaperone protein DnaJ from Brevibacillus choshinensis.